The primary structure comprises 299 residues: Oxygen-dependent coproporphyrinogen-III oxidase (299 aa).

Residue S92 participates in substrate binding. 2 residues coordinate a divalent metal cation: H96 and H106. The active-site Proton donor is H106. Residue 108-110 participates in substrate binding; sequence NVR. Positions 145 and 175 each coordinate a divalent metal cation. Positions 240 to 275 are important for dimerization; it reads YVEFNLVWDRGTLFGLQTGGRTESILMSMPPLVRWE. Residue 258 to 260 coordinates substrate; that stretch reads GGR.

It belongs to the aerobic coproporphyrinogen-III oxidase family. Homodimer. A divalent metal cation serves as cofactor.

The protein localises to the cytoplasm. It catalyses the reaction coproporphyrinogen III + O2 + 2 H(+) = protoporphyrinogen IX + 2 CO2 + 2 H2O. The protein operates within porphyrin-containing compound metabolism; protoporphyrin-IX biosynthesis; protoporphyrinogen-IX from coproporphyrinogen-III (O2 route): step 1/1. In terms of biological role, involved in the heme biosynthesis. Catalyzes the aerobic oxidative decarboxylation of propionate groups of rings A and B of coproporphyrinogen-III to yield the vinyl groups in protoporphyrinogen-IX. The sequence is that of Oxygen-dependent coproporphyrinogen-III oxidase from Salmonella choleraesuis (strain SC-B67).